A 599-amino-acid polypeptide reads, in one-letter code: Subtilisin-like protease 1 (599 aa).

An N-terminal signal peptide occupies residues 1 to 20; the sequence is MRTVFIYACIISLVLRTIPA. Positions 21 to 195 are cleaved as a propeptide — inhibition peptide; it reads HNDLMSKEKE…VESDELVGAD (175 aa). Asn-57 carries an N-linked (GlcNAc...) asparagine glycan. Residues 74 to 101 are a coiled coil; that stretch reads EDAPKEELNKIEMEKKKAEEEAKNSKKK. Positions 123, 126, 128, and 183 each coordinate Ca(2+). Asn-227 carries an N-linked (GlcNAc...) asparagine glycan. Asp-251 is a Ca(2+) binding site. In terms of domain architecture, Peptidase S8 spans 257 to 574; that stretch reads QWGLDLARLD…GGYIDILNAV (318 aa). Disulfide bonds link Cys-283–Cys-393 and Cys-372–Cys-389. The active-site Charge relay system is Asp-286. Ca(2+)-binding residues include Asp-295, Glu-306, Asp-314, Asp-315, Asp-316, Asn-318, Ile-320, Asp-322, and Asp-323. A glycan (N-linked (GlcNAc...) asparagine) is linked at Asn-331. The active-site Charge relay system is the His-342. Residue Ile-353 coordinates Ca(2+). An N-linked (GlcNAc...) asparagine glycan is attached at Asn-355. Ca(2+)-binding residues include Asn-356, Ile-358, and Val-360. N-linked (GlcNAc...) asparagine glycans are attached at residues Asn-402 and Asn-434. Cys-435 and Cys-448 form a disulfide bridge. Residue Ser-519 is the Charge relay system of the active site.

The protein belongs to the peptidase S8 family. In terms of processing, the N-terminal prodomain is cleaved.

Its subcellular location is the secreted. The protein resides in the parasitophorous vacuole lumen. It is found in the cytoplasmic vesicle. It localises to the secretory vesicle. It carries out the reaction Hydrolysis of proteins with broad specificity for peptide bonds, and a preference for a large uncharged residue in P1. Hydrolyzes peptide amides.. In terms of biological role, mediates the proteolytic maturation of serine protease SERA3. Mediates the proteolytic maturation of MSP1, and thereby may prime the parasite cell surface for invasion of fresh erythrocytes. Required for completion of the parasite pre-erythrocytic stages. Required for hepatic schizont development and merozoite formation. Required for the egress of the hepatic merozoites from the parasitophorous vacuole. Required for parasite infectivity during blood stages. Required for male gamete egress. The protein is Subtilisin-like protease 1 of Plasmodium berghei (strain Anka).